A 365-amino-acid polypeptide reads, in one-letter code: Chorismate synthase (365 aa).

Residues I41–G51 show a composition bias toward basic and acidic residues. The tract at residues I41 to A62 is disordered. R48 is a binding site for NADP(+). Residues R125–S127, G285, K300–S304, and R327 each bind FMN.

The protein belongs to the chorismate synthase family. FMNH2 is required as a cofactor.

It catalyses the reaction 5-O-(1-carboxyvinyl)-3-phosphoshikimate = chorismate + phosphate. The protein operates within metabolic intermediate biosynthesis; chorismate biosynthesis; chorismate from D-erythrose 4-phosphate and phosphoenolpyruvate: step 7/7. Its function is as follows. Catalyzes the anti-1,4-elimination of the C-3 phosphate and the C-6 proR hydrogen from 5-enolpyruvylshikimate-3-phosphate (EPSP) to yield chorismate, which is the branch point compound that serves as the starting substrate for the three terminal pathways of aromatic amino acid biosynthesis. This reaction introduces a second double bond into the aromatic ring system. The protein is Chorismate synthase of Methanosarcina mazei (strain ATCC BAA-159 / DSM 3647 / Goe1 / Go1 / JCM 11833 / OCM 88) (Methanosarcina frisia).